The sequence spans 202 residues: Large ribosomal subunit protein bL25 (202 aa).

The tract at residues 182–202 (EVEAEETEDDEAASEGEEAAE) is disordered. Over residues 183-202 (VEAEETEDDEAASEGEEAAE) the composition is skewed to acidic residues.

This sequence belongs to the bacterial ribosomal protein bL25 family. CTC subfamily. Part of the 50S ribosomal subunit; part of the 5S rRNA/L5/L18/L25 subcomplex. Contacts the 5S rRNA. Binds to the 5S rRNA independently of L5 and L18.

Functionally, this is one of the proteins that binds to the 5S RNA in the ribosome where it forms part of the central protuberance. This chain is Large ribosomal subunit protein bL25, found in Corynebacterium glutamicum (strain R).